The primary structure comprises 1904 residues: Fatty acid synthase beta subunit hexB (1904 aa).

The tract at residues 24–395 (LSVAFGGQGP…TEGTGVRVIQ (372 aa)) is acetyltransferase (AT) domain. Residues 447 to 691 (TQLLNAPPVM…LIVQTEGVGD (245 aa)) are enoyl reductase (ER) domain. The interval 1001–1491 (GPAADCWTHH…RPNDRLKIQL (491 aa)) is dehydratase (DH) domain. The MaoC-like domain maps to 1399–1512 (PGWNEGSTVL…MKVQAFNDET (114 aa)). A malonyl/palmitoyl transferase (MT/PT) domain region spans residues 1530 to 1893 (YVFCGQGSQE…IEHVQSVTGS (364 aa)).

The protein belongs to the fungal fatty acid synthetase subunit beta family. [Alpha(6)beta(6)] hexamers of two multifunctional subunits (alpha and beta).

The catalysed reaction is acetyl-CoA + n malonyl-CoA + 2n NADPH + 4n H(+) = a long-chain-acyl-CoA + n CoA + n CO2 + 2n NADP(+).. It catalyses the reaction holo-[ACP] + acetyl-CoA = acetyl-[ACP] + CoA. The enzyme catalyses holo-[ACP] + malonyl-CoA = malonyl-[ACP] + CoA. It carries out the reaction a (3R)-hydroxyacyl-[ACP] = a (2E)-enoyl-[ACP] + H2O. The catalysed reaction is a 2,3-saturated acyl-[ACP] + NAD(+) = a (2E)-enoyl-[ACP] + NADH + H(+). It catalyses the reaction (9Z)-octadecenoyl-[ACP] + H2O = (9Z)-octadecenoate + holo-[ACP] + H(+). It functions in the pathway mycotoxin biosynthesis. Functionally, fatty acid synthase beta subunit; part of the fragmented gene cluster that mediates the biosynthesis of dothistromin (DOTH), a polyketide toxin very similar in structure to the aflatoxin precursor, versicolorin B. The first step of the pathway is the conversion of acetate to norsolorinic acid (NOR) and requires the fatty acid synthase subunits hexA and hexB, as well as the polyketide synthase pksA. PksA combines a hexanoyl starter unit and 7 malonyl-CoA extender units to synthesize the precursor NOR. The hexanoyl starter unit is provided to the acyl-carrier protein (ACP) domain by the fungal fatty acid synthase hexA/hexB. The second step is the conversion of NOR to averantin (AVN) and requires the norsolorinic acid ketoreductase nor1, which catalyzes the dehydration of norsolorinic acid to form (1'S)-averantin. The cytochrome P450 monooxygenase avnA then catalyzes the hydroxylation of AVN to 5'hydroxyaverantin (HAVN). The next step is performed by adhA that transforms HAVN to averufin (AVF). Averufin might then be converted to hydroxyversicolorone by cypX and avfA. Hydroxyversicolorone is further converted versiconal hemiacetal acetate (VHA) by moxY. VHA is then the substrate for the versiconal hemiacetal acetate esterase est1 to yield versiconal (VAL). Versicolorin B synthase vbsA then converts VAL to versicolorin B (VERB) by closing the bisfuran ring. Then, the activity of the versicolorin B desaturase verB leads to versicolorin A (VERA). DotB, a predicted chloroperoxidase, may perform epoxidation of the A-ring of VERA. Alternatively, a cytochrome P450, such as cypX or avnA could catalyze this step. It is also possible that another, uncharacterized, cytochrome P450 enzyme is responsible for this step. Opening of the epoxide could potentially be achieved by the epoxide hydrolase epoA. However, epoA seems not to be required for DOTH biosynthesis, but other epoxide hydrolases may have the ability to complement this hydrolysis. Alternatively, opening of the epoxide ring could be achieved non-enzymatically. The next step is the deoxygenation of ring A to yield the 5,8-dihydroxyanthraquinone which is most likely catalyzed by the NADPH dehydrogenase encoded by ver1. The last stages of DOTH biosynthesis are proposed to involve hydroxylation of the bisfuran. OrdB and norB might have oxidative roles here. An alternative possibility is that cytochrome P450 monoogenases such as avnA and cypX might perform these steps in addition to previously proposed steps. The protein is Fatty acid synthase beta subunit hexB of Dothistroma septosporum (strain NZE10 / CBS 128990) (Red band needle blight fungus).